The primary structure comprises 294 residues: Phosphate acetyltransferase (294 aa).

This sequence belongs to the phosphate acetyltransferase and butyryltransferase family. Homotetramer.

It is found in the cytoplasm. It catalyses the reaction acetyl-CoA + phosphate = acetyl phosphate + CoA. The protein operates within metabolic intermediate biosynthesis; acetyl-CoA biosynthesis; acetyl-CoA from acetate: step 2/2. In terms of biological role, in addition to acetyl-CoA (100%), the enzyme accepts propionyl-CoA (60%) and butyryl-CoA (30%). The chain is Phosphate acetyltransferase (pta) from Thermotoga maritima (strain ATCC 43589 / DSM 3109 / JCM 10099 / NBRC 100826 / MSB8).